Here is a 105-residue protein sequence, read N- to C-terminus: Meiotically up-regulated gene 52 protein (105 aa).

In terms of biological role, has a role in meiosis. The protein is Meiotically up-regulated gene 52 protein (mug52) of Schizosaccharomyces pombe (strain 972 / ATCC 24843) (Fission yeast).